A 704-amino-acid chain; its full sequence is Protein cueball (704 aa).

The signal sequence occupies residues 1-26; that stretch reads MKSPCRAAAGWLVLLLSSCCLGYVIA. At 27–594 the chain is on the extracellular side; that stretch reads TEWAAAVTTD…TYCKESFNRT (568 aa). 4 LDL-receptor class B repeats span residues 69–119, 120–166, 199–242, and 243–288; these read GKLY…DHLE, RRLY…EATT, RHLY…DHYR, and NRLY…KNDY. 2 N-linked (GlcNAc...) asparagine glycosylation sites follow: N152 and N219. 3 EGF-like domains span residues 363–397, 432–478, and 514–551; these read TQQQ…KLCE, DRNR…ARCE, and EEYS…QRCE. Disulfide bonds link C372/C385, C387/C396, C436/C446, C440/C465, C467/C477, C518/C528, C522/C539, and C541/C550. N375 carries N-linked (GlcNAc...) asparagine glycosylation. The N-linked (GlcNAc...) asparagine glycan is linked to N450. An N-linked (GlcNAc...) asparagine glycan is attached at N532. An N-linked (GlcNAc...) asparagine glycan is attached at N592. The chain crosses the membrane as a helical span at residues 595 to 615; the sequence is VVYTSLCFTVSFALLLAVVLV. Topologically, residues 616–704 are cytoplasmic; sequence VSRMMKPPRP…NCGDGTAERK (89 aa).

Belongs to the cueball family.

It localises to the cell membrane. Has a role in spermatogenesis and oogenesis. This chain is Protein cueball, found in Anopheles gambiae (African malaria mosquito).